A 467-amino-acid chain; its full sequence is Probable glutamate decarboxylase gamma (467 aa).

K278 is subject to N6-(pyridoxal phosphate)lysine.

This sequence belongs to the group II decarboxylase family. It depends on pyridoxal 5'-phosphate as a cofactor.

It carries out the reaction L-glutamate + H(+) = 4-aminobutanoate + CO2. The polypeptide is Probable glutamate decarboxylase gamma (Listeria innocua serovar 6a (strain ATCC BAA-680 / CLIP 11262)).